We begin with the raw amino-acid sequence, 185 residues long: MINDIQKTAEGKMQRSVEVLKENLAKVRTGRAHTGLLDQVEVEYWGSMVPVSQVANVTLLDARTIGVKPFEGNMAAKVEKAIRDSNLGLNPAAVGDLIRVPMPMLTEERRKDLIKVVRGEAEEGRVSIRNVRRDANDHIKKLLKDKEISEDEARRGEEAVQKLTDKYITEADKLLTAKEEDLMAI.

Belongs to the RRF family.

Its subcellular location is the cytoplasm. In terms of biological role, responsible for the release of ribosomes from messenger RNA at the termination of protein biosynthesis. May increase the efficiency of translation by recycling ribosomes from one round of translation to another. This is Ribosome-recycling factor from Neisseria meningitidis serogroup A / serotype 4A (strain DSM 15465 / Z2491).